A 241-amino-acid polypeptide reads, in one-letter code: NAD(P)H-quinone oxidoreductase subunit K (241 aa).

Residues Cys-60, Cys-61, Cys-125, and Cys-156 each coordinate [4Fe-4S] cluster. The interval 220–241 (SSQKEKITELPEKTEITNTEKD) is disordered. The span at 222-241 (QKEKITELPEKTEITNTEKD) shows a compositional bias: basic and acidic residues.

This sequence belongs to the complex I 20 kDa subunit family. NDH-1 can be composed of about 15 different subunits; different subcomplexes with different compositions have been identified which probably have different functions. It depends on [4Fe-4S] cluster as a cofactor.

The protein localises to the cellular thylakoid membrane. It carries out the reaction a plastoquinone + NADH + (n+1) H(+)(in) = a plastoquinol + NAD(+) + n H(+)(out). The enzyme catalyses a plastoquinone + NADPH + (n+1) H(+)(in) = a plastoquinol + NADP(+) + n H(+)(out). Its function is as follows. NDH-1 shuttles electrons from an unknown electron donor, via FMN and iron-sulfur (Fe-S) centers, to quinones in the respiratory and/or the photosynthetic chain. The immediate electron acceptor for the enzyme in this species is believed to be plastoquinone. Couples the redox reaction to proton translocation, and thus conserves the redox energy in a proton gradient. Cyanobacterial NDH-1 also plays a role in inorganic carbon-concentration. In Prochlorococcus marinus (strain MIT 9215), this protein is NAD(P)H-quinone oxidoreductase subunit K.